We begin with the raw amino-acid sequence, 184 residues long: Urease accessory protein UreE (184 aa).

The segment at 147–184 (EHHGHSHSHSHSHDHDHDHDHDHQHGPSCSHGHHHGHR) is disordered. Positions 157-171 (HSHDHDHDHDHDHQH) are enriched in basic and acidic residues.

The protein belongs to the UreE family.

It localises to the cytoplasm. Functionally, involved in urease metallocenter assembly. Binds nickel. Probably functions as a nickel donor during metallocenter assembly. The chain is Urease accessory protein UreE from Burkholderia mallei (strain ATCC 23344).